A 470-amino-acid chain; its full sequence is Nuclear receptor subfamily 0 group B member 1 (470 aa).

3 repeat units span residues 1–67, 68–133, and 134–200. The interval 1 to 253 is 4 X 67 AA tandem repeats; that stretch reads MAGENHQWQG…RPVALKSPQV (253 aa). 3 consecutive short sequence motifs (LXXLL motif) follow at residues 13–17, 80–84, and 146–150; these read LYNML, LYSML, and LYSLL. Residues 201 to 253 form a 4; truncated repeat; the sequence is FCGEDHPQQGSTLYCVPTSTNQAQAAPEERPRAPWWDTSSGALRPVALKSPQV. The NR LBD domain maps to 205 to 469; the sequence is DHPQQGSTLY…DMMLEMLCTK (265 aa). An AF-2 motif motif is present at residues 461-466; that stretch reads MMLEML.

Belongs to the nuclear hormone receptor family. NR0 subfamily. Homodimer. Interacts with NR5A1, NR5A2, NR0B2 and with COPS2. Interacts with ESRRB; represses ESRRB activity at the GATA6 promoter.

The protein resides in the nucleus. It localises to the cytoplasm. Functionally, nuclear receptor that lacks a DNA-binding domain and acts as a corepressor that inhibits the transcriptional activity of other nuclear receptors through heterodimeric interactions. Component of a cascade required for the development of the hypothalamic-pituitary-adrenal-gonadal axis. May also have a role in the development of the embryo and in the maintenance of embryonic stem cell pluripotency. This is Nuclear receptor subfamily 0 group B member 1 (NR0B1) from Homo sapiens (Human).